Here is a 256-residue protein sequence, read N- to C-terminus: Geranylgeranylglyceryl phosphate synthase (256 aa).

Residues D28 and S53 each contribute to the Mg(2+) site. Sn-glycerol 1-phosphate contacts are provided by residues 172–178 (YLEAGSG), 203–204 (GG), and 225–226 (GT).

Belongs to the GGGP/HepGP synthase family. Group II subfamily. It depends on Mg(2+) as a cofactor.

It localises to the cytoplasm. The catalysed reaction is sn-glycerol 1-phosphate + (2E,6E,10E)-geranylgeranyl diphosphate = sn-3-O-(geranylgeranyl)glycerol 1-phosphate + diphosphate. Its pathway is membrane lipid metabolism; glycerophospholipid metabolism. Functionally, prenyltransferase that catalyzes the transfer of the geranylgeranyl moiety of geranylgeranyl diphosphate (GGPP) to the C3 hydroxyl of sn-glycerol-1-phosphate (G1P). This reaction is the first ether-bond-formation step in the biosynthesis of archaeal membrane lipids. This chain is Geranylgeranylglyceryl phosphate synthase, found in Methanococcus maripaludis (strain C7 / ATCC BAA-1331).